We begin with the raw amino-acid sequence, 610 residues long: UvrABC system protein C (610 aa).

The region spanning 16 to 94 (SQPGVYRMYD…IKLYQPRYNV (79 aa)) is the GIY-YIG domain. The UVR domain maps to 204 to 239 (QQVLTQLISRMEEASRLLHFEDAARIRDQIQAVRRV).

Belongs to the UvrC family. Interacts with UvrB in an incision complex.

Its subcellular location is the cytoplasm. In terms of biological role, the UvrABC repair system catalyzes the recognition and processing of DNA lesions. UvrC both incises the 5' and 3' sides of the lesion. The N-terminal half is responsible for the 3' incision and the C-terminal half is responsible for the 5' incision. This is UvrABC system protein C from Yersinia enterocolitica serotype O:8 / biotype 1B (strain NCTC 13174 / 8081).